A 596-amino-acid chain; its full sequence is Chitooligosaccharidolytic beta-N-acetylglucosaminidase (596 aa).

An N-terminal signal peptide occupies residues 1-23 (MWLQAICIYTVFIIIGCGIPTAA). N-linked (GlcNAc...) asparagine glycans are attached at residues N166, N264, and N377.

Belongs to the glycosyl hydrolase 20 family.

The enzyme catalyses Hydrolysis of terminal non-reducing N-acetyl-D-hexosamine residues in N-acetyl-beta-D-hexosaminides.. In terms of biological role, active during metamorphosis to degrade chitin. In Bombyx mori (Silk moth), this protein is Chitooligosaccharidolytic beta-N-acetylglucosaminidase.